The sequence spans 355 residues: Inositol-tetrakisphosphate 1-kinase 4 (355 aa).

Position 65 (K65) interacts with 1D-myo-inositol 1,3,4-trisphosphate. 2 residues coordinate ATP: R101 and K146. Residues 107 to 318 (VVSGLRTPVS…FFLEMLRGTR (212 aa)) enclose the ATP-grasp domain. Positions 157 and 190 each coordinate 1D-myo-inositol 1,3,4-trisphosphate. ATP contacts are provided by residues 179–190 (QEFVNHGGVLFK) and S205. A disordered region spans residues 225 to 248 (FANISNQPLPPPDDDGGAADDDTP). A compositionally biased stretch (acidic residues) spans 236 to 247 (PDDDGGAADDDT). Positions 272, 289, and 291 each coordinate Mg(2+). N291 contributes to the 1D-myo-inositol 1,3,4-trisphosphate binding site.

It belongs to the ITPK1 family. Monomer. Mg(2+) serves as cofactor.

The catalysed reaction is 1D-myo-inositol 3,4,5,6-tetrakisphosphate + ATP = 1D-myo-inositol 1,3,4,5,6-pentakisphosphate + ADP + H(+). It carries out the reaction 1D-myo-inositol 1,3,4-trisphosphate + ATP = 1D-myo-inositol 1,3,4,5-tetrakisphosphate + ADP + H(+). It catalyses the reaction 1D-myo-inositol 1,3,4-trisphosphate + ATP = 1D-myo-inositol 1,3,4,6-tetrakisphosphate + ADP + H(+). Its function is as follows. Kinase that can phosphorylate various inositol polyphosphate such as Ins(3,4,5,6)P4 or Ins(1,3,4)P3 and participates in phytic acid biosynthesis in developing seeds. Phytic acid is the primary storage form of phosphorus in cereal grains and other plant seeds. The polypeptide is Inositol-tetrakisphosphate 1-kinase 4 (ITPK4) (Oryza sativa subsp. indica (Rice)).